A 620-amino-acid chain; its full sequence is Ran-binding protein 10 (620 aa).

The tract at residues 1-38 is disordered; that stretch reads MAAATADPGAGNPQAGDSSGGDSGGGLPSPGEQELSRR. Residue alanine 2 is modified to N-acetylalanine. Residues 18 to 28 show a composition bias toward gly residues; that stretch reads SSGGDSGGGLP. Residues 35–222 enclose the B30.2/SPRY domain; that stretch reads LSRRLQRLYP…VDANFGQQPF (188 aa). A LisH domain is found at 253–285; that stretch reads WQAVLQNMVSSYLVHHGYCSTATAFARMTETPI. The CTLH domain occupies 291 to 348; the sequence is SIKNRQKIQKLVLEGRVGEAIETTQRFYPGLLEHNPNLLFMLKCRQFVEMVNGTDSEV. Residues 347 to 398 show a composition bias toward polar residues; the sequence is EVRSLSSRSPKSQDSYPGSPSLSPRHGPSSSHIHNTGADSPSCSNGVASTKN. The tract at residues 347–460 is disordered; sequence EVRSLSSRSP…SDSEMEMEAE (114 aa). Serine 361 carries the post-translational modification Phosphoserine. Tyrosine 362 bears the Phosphotyrosine mark. Serine 365, serine 367, serine 369, and serine 422 each carry phosphoserine. The segment covering 409 to 436 has biased composition (low complexity); that stretch reads SSSSSSSSSSSSSSPSSVNYSESNSTDS. Residues 437-450 show a composition bias toward polar residues; sequence TKSQPHSSTSNQET. Serine 451 and serine 453 each carry phosphoserine.

This sequence belongs to the RANBP9/10 family. As to quaternary structure, may form homodimers. Identified in the CTLH complex that contains GID4, RANBP9 and/or RANBP10, MKLN1, MAEA, RMND5A (or alternatively its paralog RMND5B), GID8, ARMC8, WDR26 and YPEL5. Within this complex, MAEA, RMND5A (or alternatively its paralog RMND5B), GID8, WDR26, and RANBP9 and/or RANBP10 form the catalytic core, while GID4, MKLN1, ARMC8 and YPEL5 have ancillary roles. Interacts with RAN and RANBP9. Interacts with the HGF receptor MET. Interacts with AR. Interacts with TUBB1. Interacts with YPEL5. May interact with TUBB5. Interacts with DDX4. As to expression, expressed at highest levels in spleen and liver. Expressed in megakaryocytes and platelets (at protein level).

Its subcellular location is the cytoplasm. It is found in the nucleus. In terms of biological role, may act as an adapter protein to couple membrane receptors to intracellular signaling pathways. Core component of the CTLH E3 ubiquitin-protein ligase complex that selectively accepts ubiquitin from UBE2H and mediates ubiquitination and subsequent proteasomal degradation of the transcription factor HBP1. Enhances dihydrotestosterone-induced transactivation activity of AR, as well as dexamethasone-induced transactivation activity of NR3C1, but does not affect estrogen-induced transactivation. Acts as a guanine nucleotide exchange factor (GEF) for RAN GTPase. May play an essential role in hemostasis and in maintaining microtubule dynamics with respect to both platelet shape and function. The protein is Ran-binding protein 10 (Ranbp10) of Mus musculus (Mouse).